The following is a 152-amino-acid chain: Cytochrome c-type biogenesis CcmH-like mitochondrial protein (152 aa).

The Mitochondrial intermembrane segment spans residues Met-1–Gln-83. Residues Cys-26 and Cys-29 each coordinate heme. A helical membrane pass occupies residues Thr-84–Tyr-104. Over Lys-105 to Lys-152 the chain is Mitochondrial matrix.

The protein belongs to the CcmH/CycL/Ccl2/NrfF family.

The protein resides in the mitochondrion inner membrane. Plays a role in mitochondrial cytochrome c maturation. Probable component of a heme lyase complex involved in the reduction of apocytochrome c. This Oryza sativa subsp. indica (Rice) protein is Cytochrome c-type biogenesis CcmH-like mitochondrial protein.